The following is a 142-amino-acid chain: Cell division protein SepF (142 aa).

The protein belongs to the SepF family. Homodimer. Interacts with FtsZ.

The protein resides in the cytoplasm. Its function is as follows. Cell division protein that is part of the divisome complex and is recruited early to the Z-ring. Probably stimulates Z-ring formation, perhaps through the cross-linking of FtsZ protofilaments. Its function overlaps with FtsA. The sequence is that of Cell division protein SepF from Syntrophomonas wolfei subsp. wolfei (strain DSM 2245B / Goettingen).